The chain runs to 95 residues: DNA-directed RNA polymerase subunit Rpo11 (95 aa).

This sequence belongs to the archaeal Rpo11/eukaryotic RPB11/RPC19 RNA polymerase subunit family. In terms of assembly, part of the RNA polymerase complex.

It localises to the cytoplasm. The catalysed reaction is RNA(n) + a ribonucleoside 5'-triphosphate = RNA(n+1) + diphosphate. DNA-dependent RNA polymerase (RNAP) catalyzes the transcription of DNA into RNA using the four ribonucleoside triphosphates as substrates. In Thermococcus sibiricus (strain DSM 12597 / MM 739), this protein is DNA-directed RNA polymerase subunit Rpo11.